The primary structure comprises 116 residues: Large ribosomal subunit protein bL20 (116 aa).

It belongs to the bacterial ribosomal protein bL20 family.

Its function is as follows. Binds directly to 23S ribosomal RNA and is necessary for the in vitro assembly process of the 50S ribosomal subunit. It is not involved in the protein synthesizing functions of that subunit. The protein is Large ribosomal subunit protein bL20 of Desulfosudis oleivorans (strain DSM 6200 / JCM 39069 / Hxd3) (Desulfococcus oleovorans).